The following is a 205-amino-acid chain: Melanocortin-2 receptor accessory protein 2 (205 aa).

N9 carries an N-linked (GlcNAc...) asparagine glycan. A helical transmembrane segment spans residues 45-65 (IVIGFWVGLAVFVIFMFFVLT). Position 89 is a phosphoserine (S89).

Belongs to the MRAP family. In terms of assembly, homodimer and heterodimer. Forms antiparallel homodimers and heterodimers with MRAP. Interacts with MC1R, MC2R, MC3R, MC4R and MC5R. As to expression, expressed in the adrenal gland and brain. Not expressed in other tissues.

Its subcellular location is the cell membrane. It localises to the endoplasmic reticulum membrane. Its function is as follows. Modulator of melanocortin receptor 4 (MC4R), a receptor involved in energy homeostasis. Plays a central role in the control of energy homeostasis and body weight regulation by increasing ligand-sensitivity of MC4R and MC4R-mediated generation of cAMP. May also act as a negative regulator of MC2R: competes with MRAP for binding to MC2R and impairs the binding of corticotropin (ACTH) to MC2R. May also regulate activity of other melanocortin receptors (MC1R, MC3R and MC5R); however, additional evidence is required in vivo. The polypeptide is Melanocortin-2 receptor accessory protein 2 (MRAP2) (Homo sapiens (Human)).